A 292-amino-acid polypeptide reads, in one-letter code: MGADLPPKFQYAFRRCLFYTFVLVAWLFIGMILFPALCTPAVKQDDNEAGIFRLDAKRSDLLNVLWAETITNGEDDWSELADQKLELYEKALLQHYGIDLDKSDKSFASGLQKSFAISTTIGPLDVDDFTTLGKLIAVLYALIGTPLFLTVIGQLGKMVTSVWQGTTLWIVTIVYIFISAVIYDIVEGGSDDVPFIEAIFSIFLQFTTVGEVDNEFHGVLPYCIVVLGLALITALYQEMQHNIERFIHPFEYSFNRLCGNVERWAGEKSEDKKSIVTSRIEEENEDEISDYE.

The next 4 helical transmembrane spans lie at 17-37 (LFYT…FPAL), 135-155 (LIAV…IGQL), 166-186 (TTLW…YDIV), and 216-236 (FHGV…TALY). The disordered stretch occupies residues 267–292 (EKSEDKKSIVTSRIEEENEDEISDYE). Positions 282–292 (EENEDEISDYE) are enriched in acidic residues.

Its subcellular location is the membrane. This is an uncharacterized protein from Caenorhabditis elegans.